Here is a 234-residue protein sequence, read N- to C-terminus: Glucosamine-6-phosphate deaminase (234 aa).

D62 functions as the Proton acceptor; for enolization step in the catalytic mechanism. N128 (for ring-opening step) is an active-site residue. Catalysis depends on H130, which acts as the Proton acceptor; for ring-opening step. The active-site For ring-opening step is E135.

It belongs to the glucosamine/galactosamine-6-phosphate isomerase family. NagB subfamily.

It catalyses the reaction alpha-D-glucosamine 6-phosphate + H2O = beta-D-fructose 6-phosphate + NH4(+). It participates in amino-sugar metabolism; N-acetylneuraminate degradation; D-fructose 6-phosphate from N-acetylneuraminate: step 5/5. Catalyzes the reversible isomerization-deamination of glucosamine 6-phosphate (GlcN6P) to form fructose 6-phosphate (Fru6P) and ammonium ion. The protein is Glucosamine-6-phosphate deaminase of Streptococcus pyogenes serotype M3 (strain ATCC BAA-595 / MGAS315).